Reading from the N-terminus, the 79-residue chain is Acyl carrier protein (79 aa).

In terms of domain architecture, Carrier spans 2–77 (SDIEERVKKI…SAIDYVNAHK (76 aa)). Residue Ser37 is modified to O-(pantetheine 4'-phosphoryl)serine.

It belongs to the acyl carrier protein (ACP) family. Post-translationally, 4'-phosphopantetheine is transferred from CoA to a specific serine of apo-ACP by AcpS. This modification is essential for activity because fatty acids are bound in thioester linkage to the sulfhydryl of the prosthetic group.

It localises to the cytoplasm. Its pathway is lipid metabolism; fatty acid biosynthesis. In terms of biological role, carrier of the growing fatty acid chain in fatty acid biosynthesis. The sequence is that of Acyl carrier protein from Pseudoalteromonas atlantica (strain T6c / ATCC BAA-1087).